We begin with the raw amino-acid sequence, 1263 residues long: Valine--tRNA ligase (1263 aa).

S2 carries the N-acetylserine modification. Positions 89 to 219 (GSRAAVLVQQ…YSGARSVTQQ (131 aa)) constitute a GST C-terminal domain. The disordered stretch occupies residues 218 to 294 (QQPGSEVIAP…PGEKKDVSGA (77 aa)). Composition is skewed to basic and acidic residues over residues 234–248 (LKKE…EKFQ) and 259–274 (HGEK…KRDP). A 'HIGH' region motif is present at residues 343-353 (PNVTGSLHLGH). A phosphoserine mark is found at S436 and S526. Position 644 is an N6-acetyllysine (K644). Positions 861-865 (KMSKS) match the 'KMSKS' region motif. Residue K864 participates in ATP binding.

Belongs to the class-I aminoacyl-tRNA synthetase family. As to quaternary structure, forms high-molecular-mass aggregates with elongation factor 1.

It catalyses the reaction tRNA(Val) + L-valine + ATP = L-valyl-tRNA(Val) + AMP + diphosphate. With respect to regulation, can be regulated by protein kinase C-dependent phosphorylation. In Mus musculus (Mouse), this protein is Valine--tRNA ligase (Vars1).